Reading from the N-terminus, the 313-residue chain is 4-diphosphocytidyl-2-C-methyl-D-erythritol kinase (313 aa).

Residue K29 is part of the active site. ATP is bound at residue P113 to S123. D155 is an active-site residue.

This sequence belongs to the GHMP kinase family. IspE subfamily.

It carries out the reaction 4-CDP-2-C-methyl-D-erythritol + ATP = 4-CDP-2-C-methyl-D-erythritol 2-phosphate + ADP + H(+). The protein operates within isoprenoid biosynthesis; isopentenyl diphosphate biosynthesis via DXP pathway; isopentenyl diphosphate from 1-deoxy-D-xylulose 5-phosphate: step 3/6. In terms of biological role, catalyzes the phosphorylation of the position 2 hydroxy group of 4-diphosphocytidyl-2C-methyl-D-erythritol. The protein is 4-diphosphocytidyl-2-C-methyl-D-erythritol kinase of Haemophilus influenzae (strain 86-028NP).